We begin with the raw amino-acid sequence, 491 residues long: Chromosomal replication initiator protein DnaA (491 aa).

The interval 1-69 is domain I, interacts with DnaA modulators; it reads MTTWDKCLKK…TIQECHGNDL (69 aa). The segment at 69–154 is domain II; it reads LIIEYSNKKF…KEDEEYSFGL (86 aa). The domain III, AAA+ region stretch occupies residues 155-371; it reads PLKEKYVFDS…GALNRVLTTS (217 aa). ATP contacts are provided by glycine 199, glycine 201, lysine 202, and threonine 203. The domain IV, binds dsDNA stretch occupies residues 372-491; it reads KFNHKDPTIE…YELLLDKISR (120 aa).

The protein belongs to the DnaA family. Oligomerizes as a right-handed, spiral filament on DNA at oriC.

The protein localises to the cytoplasm. Functionally, plays an essential role in the initiation and regulation of chromosomal replication. ATP-DnaA binds to the origin of replication (oriC) to initiate formation of the DNA replication initiation complex once per cell cycle. Binds the DnaA box (a 9 base pair repeat at the origin) and separates the double-stranded (ds)DNA. Forms a right-handed helical filament on oriC DNA; dsDNA binds to the exterior of the filament while single-stranded (ss)DNA is stabiized in the filament's interior. The ATP-DnaA-oriC complex binds and stabilizes one strand of the AT-rich DNA unwinding element (DUE), permitting loading of DNA polymerase. After initiation quickly degrades to an ADP-DnaA complex that is not apt for DNA replication. Binds acidic phospholipids. The polypeptide is Chromosomal replication initiator protein DnaA (Francisella tularensis subsp. holarctica (strain OSU18)).